Consider the following 194-residue polypeptide: Fibroblast growth factor 7 (194 aa).

An N-terminal signal peptide occupies residues 1–31; sequence MHKWILTWILPTLLYRSCFHIICLVGTISLA. Asn-45 carries an N-linked (GlcNAc...) asparagine glycan.

The protein belongs to the heparin-binding growth factors family. In terms of assembly, interacts with FGFBP1. Interacts with FGFR2. Affinity between fibroblast growth factors (FGFs) and their receptors is increased by heparan sulfate glycosaminoglycans that function as coreceptors. Epithelial cell.

The protein localises to the secreted. Plays an important role in the regulation of embryonic development, cell proliferation and cell differentiation. Required for normal branching morphogenesis. Growth factor active on keratinocytes. Possible major paracrine effector of normal epithelial cell proliferation. In Homo sapiens (Human), this protein is Fibroblast growth factor 7 (FGF7).